The primary structure comprises 245 residues: Thiopurine S-methyltransferase (245 aa).

Phosphoserine is present on Ser14. Trp29–Phe40 is a binding site for S-adenosyl-L-methionine. Phe40 contacts substrate. Position 58 is an N6-acetyllysine (Lys58). Positions 69, 90, and 152 each coordinate S-adenosyl-L-methionine.

The protein belongs to the class I-like SAM-binding methyltransferase superfamily. TPMT family. In terms of assembly, monomer.

It localises to the cytoplasm. The catalysed reaction is S-adenosyl-L-methionine + a thiopurine = S-adenosyl-L-homocysteine + a thiopurine S-methylether.. This chain is Thiopurine S-methyltransferase (TPMT), found in Equus caballus (Horse).